Here is a 145-residue protein sequence, read N- to C-terminus: Sperm mitochondrial-associated cysteine-rich protein (145 aa).

Phosphoserine is present on residues Ser38, Ser45, Ser113, and Ser131. A disordered region spans residues Cys105–Lys145. The span at Asp116–Lys145 shows a compositional bias: polar residues.

As to expression, testis. Selectively expressed in the spermatids of seminiferous tubules and in flagella of epididymal sperm.

It is found in the cytoplasm. The protein localises to the mitochondrion membrane. Its function is as follows. Involved in sperm motility. Its absence is associated with genetic background dependent male infertility. Infertility may be due to reduced sperm motility in the female reproductive tract and inability to penetrate the oocyte zona pellucida. This chain is Sperm mitochondrial-associated cysteine-rich protein (Smcp), found in Rattus norvegicus (Rat).